The sequence spans 225 residues: Claudin-8 (225 aa).

At 1–7 (MATYALQ) the chain is on the cytoplasmic side. A helical membrane pass occupies residues 8–28 (MAALVLGGVGMVGTVAVTIMP). Topologically, residues 29 to 81 (QWRVSAFIESNIVVFENRWEGLWMNCMRHANIRMQCKVYDSLLALSPDLQASR) are extracellular. A helical membrane pass occupies residues 82–102 (GLMCAASVLAFLAFMTAILGM). The Cytoplasmic segment spans residues 103–117 (KCTRCTGDDENVKSR). The helical transmembrane segment at 118–138 (ILLTAGIIFFITGLVVLIPVS) threads the bilayer. Residues 139 to 166 (WVANSIIRDFYNPLVDVALKRELGEALY) lie on the Extracellular side of the membrane. The chain crosses the membrane as a helical span at residues 167–187 (IGWTTALVLIAGGALFCCVFC). The Cytoplasmic segment spans residues 188–225 (CTERSNSYRYSVPSHRTTQRSFHAEKRSPSIYSKSQYV). K213 participates in a covalent cross-link: Glycyl lysine isopeptide (Lys-Gly) (interchain with G-Cter in ubiquitin). The interactions with TJP1, TJP2 and TJP3 stretch occupies residues 224–225 (YV).

This sequence belongs to the claudin family. Can form heteropolymeric strands with other claudins. Interacts with CLDN4. Directly interacts with TJP1/ZO-1, TJP2/ZO-2 and TJP3/ZO-3. Interacts with KLHL3. Ubiquitinated by the BCR(KLHL3) E3 ubiquitin ligase complex in the kidney, leading to its degradation. As to expression, expressed primarily in lung and kidney. Present in both cortical and medullar collecting ducts (at protein level).

The protein resides in the cell junction. Its subcellular location is the tight junction. It localises to the cell membrane. The catalysed reaction is chloride(in) = chloride(out). It catalyses the reaction bromide(in) = bromide(out). The enzyme catalyses iodide(out) = iodide(in). It carries out the reaction fluoride(in) = fluoride(out). Functionally, can associate with other claudins to regulate tight junction structural and functional strand dynamics. May coassemble with CLDN4 into tight junction strands containing anion-selective channels that convey paracellular chloride permeability in renal collecting ducts. Cannot form tight junction strands on its own. The protein is Claudin-8 of Mus musculus (Mouse).